Reading from the N-terminus, the 450-residue chain is MRRMRFSPRSSFARTLLLIVTLLFVSLVTTYLVVLNFAILPSLQQFNKVLAYEVRMLMTDKLQLEDGTQLVVPPAFRREIYRELGISLYTNEAAEEAGLRWAQHYEFLSHQMAQQLGGPTEVRVEVNKSSPVVWLKTWLSPNIWVRVPLTEIHQGDFSPLFRYTLAIMLLAIGGAWLFIRIQNRPLVDLEHAALQVGKGIIPPPLREYGASEVRSVTRAFNHMAAGVKQLADDRTLLMAGVSHDLRTPLTRIRLATEMMGEEDGYLAESINKDIEECNAIIEQFIDYLRTGQEMPMEMADLNSVLGEVIAAESGYEREINTALQAGSIQVKMHPLSIKRAVANMVVNAARYGNCWIKVSSGTESHRAWFQVEDDGPGIKPEQRKHLFQPFVRGDSARSTSGTGLGLAIVQRIIDNHNGMLEIGTSERGGLSIRAWLPVPVARVQGTTKEA.

Residues 1 to 15 (MRRMRFSPRSSFART) are Cytoplasmic-facing. A helical membrane pass occupies residues 16–35 (LLLIVTLLFVSLVTTYLVVL). The Periplasmic segment spans residues 36–158 (NFAILPSLQQ…LTEIHQGDFS (123 aa)). A helical membrane pass occupies residues 159–179 (PLFRYTLAIMLLAIGGAWLFI). Residues 180–232 (RIQNRPLVDLEHAALQVGKGIIPPPLREYGASEVRSVTRAFNHMAAGVKQLAD) enclose the HAMP domain. At 180 to 450 (RIQNRPLVDL…ARVQGTTKEA (271 aa)) the chain is on the cytoplasmic side. A cytoplasmic dimerization domain (CDD), when dimerized forms osmosensitive core region spans residues 223–289 (MAAGVKQLAD…IIEQFIDYLR (67 aa)). The Histidine kinase domain maps to 240–440 (GVSHDLRTPL…SIRAWLPVPV (201 aa)). ATP contacts are provided by residues His243, 347 to 351 (NAARY), Asp373, 392 to 393 (RG), and 402 to 406 (TGLGL). His243 is subject to Phosphohistidine; by autocatalysis.

In terms of assembly, homodimer. Post-translationally, autophosphorylated.

It is found in the cell inner membrane. It catalyses the reaction ATP + protein L-histidine = ADP + protein N-phospho-L-histidine.. Its function is as follows. Member of the two-component regulatory system EnvZ/OmpR involved in regulating expression of the outer membrane porins OmpC and OmpF as well as other genes. Unlike E.coli or S.typhimurium both porins are expressed constitutively. Involved in regulation of the biosynthesis of Vi polysaccharide, a capsular antigen thought to be involved in the virulence of S.typhi. Vi antigen is synthesized at low NaCl concentrations (under 0.4 M). EnvZ functions as a membrane-associated protein kinase that phosphorylates OmpR in response to environmental signals. This is Sensor histidine kinase EnvZ (envZ) from Salmonella typhi.